Reading from the N-terminus, the 137-residue chain is Small ribosomal subunit protein uS12 (137 aa).

2 disordered regions span residues 1–22 (MPTI…SKSP) and 37–57 (KNPS…TPKK). Residues 9 to 19 (RKGRKSHKGKS) show a composition bias toward basic residues. Residue Asp102 is modified to 3-methylthioaspartic acid.

This sequence belongs to the universal ribosomal protein uS12 family. In terms of assembly, part of the 30S ribosomal subunit. Contacts proteins S8 and S17. May interact with IF1 in the 30S initiation complex.

Its function is as follows. With S4 and S5 plays an important role in translational accuracy. Functionally, interacts with and stabilizes bases of the 16S rRNA that are involved in tRNA selection in the A site and with the mRNA backbone. Located at the interface of the 30S and 50S subunits, it traverses the body of the 30S subunit contacting proteins on the other side and probably holding the rRNA structure together. The combined cluster of proteins S8, S12 and S17 appears to hold together the shoulder and platform of the 30S subunit. This chain is Small ribosomal subunit protein uS12, found in Limosilactobacillus fermentum (strain NBRC 3956 / LMG 18251) (Lactobacillus fermentum).